The primary structure comprises 323 residues: MASIWVGKRGTIRDYAGFNPSVDAEAIRKAIRGIGTDEKTLISILTERTNAQRLLIAKEYQALCGKELKDDLKGDLSGHFKHLMVALVTPPAVFDAKQLKKSMKGMGTNEDALIEILTTRTSKQMQEIGHAYYTAYKKSLGDEISSETSGDFRKALLILANGRRDESLKVDEQLARKDAQILYNAGEKRWGTDEDAFTNILCLRSFPQLKLTFDEYRNISQKDIEDSIKGELSGHFEDLLLAIVRCARNTPAFLAERLYRALKGAGTDEFTLNRIMVSRSEIDLLDIRAEFKKLSGYSLYSAIKSDTSGDYEITLLKICGGDD.

An N-acetylalanine modification is found at Ala-2. Annexin repeat units follow at residues 18–89, 90–161, 173–245, and 249–320; these read FNPS…ALVT, PPAV…ILAN, QLAR…AIVR, and NTPA…KICG. Lys-177 is subject to N6-acetyllysine. Residue Thr-267 is modified to Phosphothreonine.

Belongs to the annexin family.

Inhibitor of phospholipase A2, also possesses anti-coagulant properties. Also cleaves the cyclic bond of inositol 1,2-cyclic phosphate to form inositol 1-phosphate. The polypeptide is Annexin A3 (ANXA3) (Bos taurus (Bovine)).